A 419-amino-acid chain; its full sequence is DNA ligase (419 aa).

The tract at residues 1-120 (MLNQFPGQLS…ARQKRGAHTN (120 aa)) is NTD. Residues 121 to 317 (RGMIPPMLVK…NYHSPHLAKL (197 aa)) form an AD domain region. Lys151 acts as the N6-AMP-lysine intermediate in catalysis. Residues 318–419 (KPLLDAEFIL…REPINVLEII (102 aa)) are OB domain.

The protein belongs to the ATP-dependent DNA ligase family.

Its subcellular location is the virion. It carries out the reaction ATP + (deoxyribonucleotide)n-3'-hydroxyl + 5'-phospho-(deoxyribonucleotide)m = (deoxyribonucleotide)n+m + AMP + diphosphate.. Its function is as follows. Very low-fidelity DNA ligase that seals nicks in double-stranded DNA during DNA repair. Together with the viral repair DNA polymerase X, fills the single nucleotide gaps generated by the AP endonuclease. It is not essential for viral replication and recombination. Displays a very low adenylation activity towards DNA with 3'-dideoxy- or 3'-amino-terminated nicks compared to regular nick DNA. The polypeptide is DNA ligase (Ornithodoros (relapsing fever ticks)).